The primary structure comprises 57 residues: Delta-elapitoxin-Cb1a (57 aa).

4 cysteine pairs are disulfide-bonded: C3–C22, C15–C36, C40–C49, and C50–C55.

This sequence belongs to the three-finger toxin family. Short-chain subfamily. Expressed by the venom gland.

Its subcellular location is the secreted. Its function is as follows. This toxin shifts the voltage-dependence of Nav1.4/SCN4A activation to more hyperpolarised potentials, inhibits inactivation, and produces large ramp currents, consistent with its profound effects on contractile force in an isolated skeletal muscle preparation. This toxin produces large muscle contractions and fasciculations in the indirectly stimulated chick biventer cervicis nerve-muscle assay, which are significantly inhibited by the addition of the sodium channel antagonist tetrodotoxin. This is Delta-elapitoxin-Cb1a from Calliophis bivirgatus (Blue Malaysian coral snake).